Reading from the N-terminus, the 252-residue chain is 3-dehydroquinate dehydratase (252 aa).

3-dehydroquinate-binding positions include serine 21, 46–48 (EWR), and arginine 82. The active-site Proton donor/acceptor is histidine 143. The active-site Schiff-base intermediate with substrate is lysine 170. The 3-dehydroquinate site is built by arginine 213, serine 232, and glutamine 236.

The protein belongs to the type-I 3-dehydroquinase family. Homodimer.

It catalyses the reaction 3-dehydroquinate = 3-dehydroshikimate + H2O. The protein operates within metabolic intermediate biosynthesis; chorismate biosynthesis; chorismate from D-erythrose 4-phosphate and phosphoenolpyruvate: step 3/7. In terms of biological role, involved in the third step of the chorismate pathway, which leads to the biosynthesis of aromatic amino acids. Catalyzes the cis-dehydration of 3-dehydroquinate (DHQ) and introduces the first double bond of the aromatic ring to yield 3-dehydroshikimate. The protein is 3-dehydroquinate dehydratase of Shigella sonnei (strain Ss046).